A 142-amino-acid polypeptide reads, in one-letter code: ATP synthase epsilon chain (142 aa).

Belongs to the ATPase epsilon chain family. In terms of assembly, F-type ATPases have 2 components, CF(1) - the catalytic core - and CF(0) - the membrane proton channel. CF(1) has five subunits: alpha(3), beta(3), gamma(1), delta(1), epsilon(1). CF(0) has three main subunits: a, b and c.

The protein resides in the cell inner membrane. Produces ATP from ADP in the presence of a proton gradient across the membrane. This chain is ATP synthase epsilon chain, found in Haemophilus influenzae (strain 86-028NP).